We begin with the raw amino-acid sequence, 218 residues long: dTTP/UTP pyrophosphatase (218 aa).

A compositionally biased stretch (polar residues) spans 1 to 10 (MTASPSSAEG). A disordered region spans residues 1-20 (MTASPSSAEGSSGLPDRPKL). The Proton acceptor role is filled by Asp-87.

It belongs to the Maf family. YhdE subfamily. Requires a divalent metal cation as cofactor.

The protein resides in the cytoplasm. It carries out the reaction dTTP + H2O = dTMP + diphosphate + H(+). The catalysed reaction is UTP + H2O = UMP + diphosphate + H(+). In terms of biological role, nucleoside triphosphate pyrophosphatase that hydrolyzes dTTP and UTP. May have a dual role in cell division arrest and in preventing the incorporation of modified nucleotides into cellular nucleic acids. The polypeptide is dTTP/UTP pyrophosphatase (Gluconobacter oxydans (strain 621H) (Gluconobacter suboxydans)).